The sequence spans 210 residues: Hypoxanthine-guanine phosphoribosyltransferase (210 aa).

Residues lysine 54, glutamate 113–threonine 121, lysine 145, and aspartate 173 each bind GMP. The Proton acceptor role is filled by aspartate 117. A Mg(2+)-binding site is contributed by aspartate 173.

Belongs to the purine/pyrimidine phosphoribosyltransferase family. The cofactor is Mg(2+).

It is found in the cytoplasm. The catalysed reaction is IMP + diphosphate = hypoxanthine + 5-phospho-alpha-D-ribose 1-diphosphate. It carries out the reaction GMP + diphosphate = guanine + 5-phospho-alpha-D-ribose 1-diphosphate. It functions in the pathway purine metabolism; IMP biosynthesis via salvage pathway; IMP from hypoxanthine: step 1/1. Converts guanine to guanosine monophosphate, and hypoxanthine to inosine monophosphate. Transfers the 5-phosphoribosyl group from 5-phosphoribosylpyrophosphate onto the purine. Plays a central role in the generation of purine nucleotides through the purine salvage pathway. The polypeptide is Hypoxanthine-guanine phosphoribosyltransferase (HGPRT) (Trypanosoma brucei brucei).